An 809-amino-acid polypeptide reads, in one-letter code: Glycerol-3-phosphate acyltransferase (809 aa).

Residues 306–311 (HRSHMD) carry the HXXXXD motif motif.

This sequence belongs to the GPAT/DAPAT family.

The protein localises to the cell inner membrane. The catalysed reaction is sn-glycerol 3-phosphate + an acyl-CoA = a 1-acyl-sn-glycero-3-phosphate + CoA. The protein operates within phospholipid metabolism; CDP-diacylglycerol biosynthesis; CDP-diacylglycerol from sn-glycerol 3-phosphate: step 1/3. In Vibrio vulnificus (strain CMCP6), this protein is Glycerol-3-phosphate acyltransferase.